Here is a 291-residue protein sequence, read N- to C-terminus: tRNA U34 carboxymethyltransferase (291 aa).

Carboxy-S-adenosyl-L-methionine contacts are provided by residues Lys-61, Trp-75, Lys-80, Gly-100, 122–124 (DPS), 149–150 (VE), Tyr-169, and Arg-284.

It belongs to the class I-like SAM-binding methyltransferase superfamily. CmoB family. Homotetramer.

The enzyme catalyses carboxy-S-adenosyl-L-methionine + 5-hydroxyuridine(34) in tRNA = 5-carboxymethoxyuridine(34) in tRNA + S-adenosyl-L-homocysteine + H(+). Functionally, catalyzes carboxymethyl transfer from carboxy-S-adenosyl-L-methionine (Cx-SAM) to 5-hydroxyuridine (ho5U) to form 5-carboxymethoxyuridine (cmo5U) at position 34 in tRNAs. The sequence is that of tRNA U34 carboxymethyltransferase from Campylobacter jejuni subsp. jejuni serotype O:6 (strain 81116 / NCTC 11828).